Reading from the N-terminus, the 348-residue chain is tRNA N6-adenosine threonylcarbamoyltransferase (348 aa).

Residues H116 and H120 each coordinate Fe cation. Residues 138-142 (IISGG), D171, G184, and N282 contribute to the substrate site. D310 contributes to the Fe cation binding site.

This sequence belongs to the KAE1 / TsaD family. Fe(2+) is required as a cofactor.

The protein localises to the cytoplasm. It catalyses the reaction L-threonylcarbamoyladenylate + adenosine(37) in tRNA = N(6)-L-threonylcarbamoyladenosine(37) in tRNA + AMP + H(+). Required for the formation of a threonylcarbamoyl group on adenosine at position 37 (t(6)A37) in tRNAs that read codons beginning with adenine. Is involved in the transfer of the threonylcarbamoyl moiety of threonylcarbamoyl-AMP (TC-AMP) to the N6 group of A37, together with TsaE and TsaB. TsaD likely plays a direct catalytic role in this reaction. The chain is tRNA N6-adenosine threonylcarbamoyltransferase from Ehrlichia ruminantium (strain Welgevonden).